The following is a 185-amino-acid chain: Ribosome-recycling factor (185 aa).

This sequence belongs to the RRF family.

The protein localises to the cytoplasm. Responsible for the release of ribosomes from messenger RNA at the termination of protein biosynthesis. May increase the efficiency of translation by recycling ribosomes from one round of translation to another. This Zymomonas mobilis subsp. mobilis (strain ATCC 31821 / ZM4 / CP4) protein is Ribosome-recycling factor.